We begin with the raw amino-acid sequence, 346 residues long: LRP2-binding protein (346 aa).

The stretch at 58 to 91 is one TPR repeat; that stretch reads AMAYFLRGQLYFEEGWYEEALAQFEEIQEKDHQA. Sel1-like repeat units follow at residues 92–124, 132–167, 172–205, 206–241, 242–276, and 296–331; these read IYQL…DSSC, FAAA…DNGN, VKAQ…GNGN, LESQ…ERGN, VYAQ…EVHD, and AMAS…RLNP.

As to quaternary structure, interacts with LRP2.

It localises to the cytoplasm. Functionally, may act as an adapter that regulates LRP2 function. This Rattus norvegicus (Rat) protein is LRP2-binding protein (Lrp2bp).